The chain runs to 483 residues: GTPase Obg (483 aa).

In terms of domain architecture, Obg spans 2–159; the sequence is SRFIDRVVLH…RDLVLELKSV (158 aa). The region spanning 160–340 is the OBG-type G domain; sequence ADVGLLGFPS…LTFALAKMVR (181 aa). Residues 166–173, 191–195, 212–215, 292–295, and 321–323 each bind GTP; these read GFPSAGKS, FTTLV, DVPG, NKTD, and SAV. Mg(2+) is bound by residues Ser-173 and Thr-193. Residues 358 to 438 enclose the OCT domain; it reads PVKVKDSSFT…IGDVSFEWEP (81 aa).

The protein belongs to the TRAFAC class OBG-HflX-like GTPase superfamily. OBG GTPase family. Monomer. Mg(2+) is required as a cofactor.

The protein resides in the cytoplasm. Its function is as follows. An essential GTPase which binds GTP, GDP and possibly (p)ppGpp with moderate affinity, with high nucleotide exchange rates and a fairly low GTP hydrolysis rate. Plays a role in control of the cell cycle, stress response, ribosome biogenesis and in those bacteria that undergo differentiation, in morphogenesis control. The sequence is that of GTPase Obg from Rhodococcus erythropolis (strain PR4 / NBRC 100887).